The following is a 173-amino-acid chain: uncharacterized protein (173 aa).

Positions 1 to 25 (MPVVTAVGRRRGFAMPWVSTARSGA) are cleaved as a signal peptide.

This is an uncharacterized protein from Mycobacterium bovis (strain ATCC BAA-935 / AF2122/97).